A 512-amino-acid chain; its full sequence is Solute carrier family 40 member 2 (512 aa).

Positions 1-28 (MEEETETRVFLSNEQHQEEEEEEEEEPS) are disordered. Residues 17 to 27 (QEEEEEEEEEP) show a composition bias toward acidic residues. 11 helical membrane-spanning segments follow: residues 55–75 (VALYMIYLWPNSLFLTAMYGV), 105–125 (LVTQNLSFIVAGGAVVALLVV), 133–153 (FPVFATLVVLTNLSGAIGVLS), 187–207 (GIDLSSKLLSPVITGLIISFV), 214–234 (ITFAAWATITVWIEYWLFISV), 310–330 (IVLPGVSLALLFFTVLSFGTL), 343–363 (YIIGIGRGISAGVGLAATVLY), 376–396 (GVWSFWSQWTCLLVCVGSIWV), 405–425 (MLMAGVAASRLGLWMFDLAVI), 442–462 (GVQNSLQSALDLMANLLGIIV), and 468–488 (FWMLTLISFATVSLAGILYTI).

It belongs to the ferroportin (FP) (TC 2.A.100) family. SLC40A subfamily.

The protein resides in the vacuole membrane. In terms of biological role, vacuolar transporter that is involved in the transport of excess nickel into the vacuole under iron deficiency, increasing cellular tolerance to nickel under iron deficiency stress response. This chain is Solute carrier family 40 member 2 (IREG2), found in Arabidopsis thaliana (Mouse-ear cress).